The sequence spans 671 residues: Zinc finger protein 750 (671 aa).

The segment at 25–51 (YKCFQCPFTCNEKSHLFNHMKYGLCKN) adopts a CCHC-type zinc-finger fold. The Zn(2+) site is built by Cys-27, Cys-30, His-43, and Cys-49. Disordered regions lie at residues 66–87 (PKVN…SPVP), 366–433 (ETSP…KDFT), and 592–671 (SSPG…PRVS). 2 stretches are compositionally biased toward polar residues: residues 67–78 (KVNSTDQKQPSN) and 402–412 (SPTNFTQNSQG).

The protein localises to the nucleus. In terms of biological role, transcription factor involved in epidermis differentiation. This Xenopus tropicalis (Western clawed frog) protein is Zinc finger protein 750 (znf750).